We begin with the raw amino-acid sequence, 586 residues long: Inner membrane protein YejM (586 aa).

Over 1–20 (MVTHRQRYREKVSQMVSWGH) the chain is Cytoplasmic. Residues 21 to 43 (WFALFNILLATLLGSRYLFVADW) traverse the membrane as a helical segment. The Periplasmic segment spans residues 44-57 (PTTLAGRIYSYLSI). A helical transmembrane segment spans residues 58–80 (VGHFSFLVFATYLLILFPLTFIV). At 81-84 (MSQR) the chain is on the cytoplasmic side. Residues 85–103 (LMRFLSAILATAGMTLLLI) traverse the membrane as a helical segment. Topologically, residues 104 to 134 (DSEVFTRFHLHLNPIVWELVINPDQNEMARD) are periplasmic. A helical membrane pass occupies residues 135 to 157 (WQLMFISVPVILLIEMLFATWSW). Topologically, residues 158–168 (QKLRSLTRRRH) are cytoplasmic. A helical membrane pass occupies residues 169–191 (FARPLAAFFFVSFIASHLIYIWA). Over 192 to 586 (DANFYRPITM…LTEEKRFIAN (395 aa)) the chain is Periplasmic.

To H.influenzae HI_0842.

The protein resides in the cell inner membrane. In Salmonella typhi, this protein is Inner membrane protein YejM (yejM).